A 437-amino-acid polypeptide reads, in one-letter code: Cobyrinate a,c-diamide synthase (437 aa).

A GATase cobBQ-type domain is found at 243–433 (IAAIAYDSAF…SHFHFSSARG (191 aa)). The active-site Nucleophile is cysteine 324.

It belongs to the CobB/CbiA family. The cofactor is Mg(2+).

It catalyses the reaction cob(II)yrinate + 2 L-glutamine + 2 ATP + 2 H2O = cob(II)yrinate a,c diamide + 2 L-glutamate + 2 ADP + 2 phosphate + 2 H(+). It functions in the pathway cofactor biosynthesis; adenosylcobalamin biosynthesis; cob(II)yrinate a,c-diamide from sirohydrochlorin (anaerobic route): step 10/10. In terms of biological role, catalyzes the ATP-dependent amidation of the two carboxylate groups at positions a and c of cobyrinate, using either L-glutamine or ammonia as the nitrogen source. The protein is Cobyrinate a,c-diamide synthase of Sulfurisphaera tokodaii (strain DSM 16993 / JCM 10545 / NBRC 100140 / 7) (Sulfolobus tokodaii).